The following is a 201-amino-acid chain: Adenylyl-sulfate kinase (201 aa).

An ATP-binding site is contributed by 35–42 (GLSGSGKS). Ser109 functions as the Phosphoserine intermediate in the catalytic mechanism.

This sequence belongs to the APS kinase family.

The catalysed reaction is adenosine 5'-phosphosulfate + ATP = 3'-phosphoadenylyl sulfate + ADP + H(+). It participates in sulfur metabolism; hydrogen sulfide biosynthesis; sulfite from sulfate: step 2/3. Functionally, catalyzes the synthesis of activated sulfate. In Klebsiella pneumoniae (strain 342), this protein is Adenylyl-sulfate kinase.